Here is a 224-residue protein sequence, read N- to C-terminus: Ribose-5-phosphate isomerase A (224 aa).

Residues 34–37, 87–90, and 100–103 each bind substrate; these read TGST, DGAD, and KGGG. Glutamate 109 (proton acceptor) is an active-site residue. Lysine 127 serves as a coordination point for substrate.

It belongs to the ribose 5-phosphate isomerase family. In terms of assembly, homodimer.

The catalysed reaction is aldehydo-D-ribose 5-phosphate = D-ribulose 5-phosphate. It participates in carbohydrate degradation; pentose phosphate pathway; D-ribose 5-phosphate from D-ribulose 5-phosphate (non-oxidative stage): step 1/1. In terms of biological role, catalyzes the reversible conversion of ribose-5-phosphate to ribulose 5-phosphate. The protein is Ribose-5-phosphate isomerase A of Francisella tularensis subsp. novicida (strain U112).